Reading from the N-terminus, the 124-residue chain is Large ribosomal subunit protein bL12 (124 aa).

The protein belongs to the bacterial ribosomal protein bL12 family. As to quaternary structure, homodimer. Part of the ribosomal stalk of the 50S ribosomal subunit. Forms a multimeric L10(L12)X complex, where L10 forms an elongated spine to which 2 to 4 L12 dimers bind in a sequential fashion. Binds GTP-bound translation factors.

In terms of biological role, forms part of the ribosomal stalk which helps the ribosome interact with GTP-bound translation factors. Is thus essential for accurate translation. This chain is Large ribosomal subunit protein bL12, found in Christiangramia forsetii (strain DSM 17595 / CGMCC 1.15422 / KT0803) (Gramella forsetii).